The following is a 161-amino-acid chain: MSLFNTNAYLPVVIQPHELNLDLMDNIKKAVINKYLHKETSGFMAKKIQIVEDTPMPLAELVNNEIVVHVTCNIDYKYYKVGDIVSGILTITDESDISVVCSDLICKIRSDSGTVSYDNSKYCFIKNGKVYANESTVTVMLKEAQSGMESSFVFLGNIIEK.

This sequence belongs to the poxviridae DNA-directed RNA polymerase 18 kDa subunit family. The DNA-dependent RNA polymerase used for intermediate and late genes expression consists of eight subunits 147 kDa, 133 kDa, 35 kDa, 30 kDa, 22 kDa, 19 kDa, 18 kDa and 7 kDa totalling more than 500 kDa in mass. The same holoenzyme, with the addition of the transcription-specificity factor RAP94, is used for early gene expression.

It localises to the virion. The catalysed reaction is RNA(n) + a ribonucleoside 5'-triphosphate = RNA(n+1) + diphosphate. In terms of biological role, part of the DNA-dependent RNA polymerase which catalyzes the transcription of viral DNA into RNA using the four ribonucleoside triphosphates as substrates. Responsible for the transcription of early, intermediate and late genes. DNA-dependent RNA polymerase associates with the early transcription factor (ETF) thereby allowing the early genes transcription. Late transcription, and probably also intermediate transcription, require newly synthesized RNA polymerase. This chain is DNA-directed RNA polymerase 18 kDa subunit (RPO18), found in Vertebrata (FPV).